A 279-amino-acid polypeptide reads, in one-letter code: Alcohol dehydrogenase-related 31 kDa protein (279 aa).

Position 11 to 34 (11 to 34 (YVADCGGIALETSKVLMTKNIAKL)) interacts with NAD(+). S139 is a substrate binding site. Catalysis depends on Y152, which acts as the Proton acceptor.

Belongs to the short-chain dehydrogenases/reductases (SDR) family.

The sequence is that of Alcohol dehydrogenase-related 31 kDa protein (Adhr) from Drosophila madeirensis (Fruit fly).